The sequence spans 297 residues: Chelated iron transport system membrane protein YfeD (297 aa).

Transmembrane regions (helical) follow at residues 20–40 (AIVA…YLVL), 58–78 (IVLA…SGIF), 96–116 (TVMG…FSRI), 133–153 (ISLT…LVVL), 172–192 (IGLP…LTIV), 197–217 (AVGV…AFMI), 224–244 (MLVV…LISF), and 248–268 (GATG…ALIY).

The protein belongs to the ABC-3 integral membrane protein family.

Its subcellular location is the cell inner membrane. Its function is as follows. Part of an ATP-driven transport system YfeABCD for chelated iron. This chain is Chelated iron transport system membrane protein YfeD (yfeD), found in Yersinia pestis.